The primary structure comprises 425 residues: Ribonuclease T2-like (425 aa).

Positions 1–18 (MLLNKGLLASLLAYTTTA) are cleaved as a signal peptide. 5 disulfide bridges follow: Cys-32/Cys-51, Cys-40/Cys-99, Cys-50/Cys-175, Cys-107/Cys-167, and Cys-245/Cys-281. An N-linked (GlcNAc...) asparagine glycan is attached at Asn-42. His-92 is a catalytic residue. N-linked (GlcNAc...) asparagine glycosylation is present at Asn-134. Residues Glu-160 and His-164 contribute to the active site.

This sequence belongs to the RNase T2 family.

It is found in the vacuole lumen. The protein localises to the cytoplasm. It carries out the reaction a ribonucleotidyl-ribonucleotide-RNA + H2O = a 3'-end 3'-phospho-ribonucleotide-RNA + a 5'-end dephospho-ribonucleoside-RNA + H(+). Rnase which modulates cell survival under stress conditions. Released from the vacuole to the cytoplasm during stress to promote tRNA and rRNA cleavage and to activate separately a downstream pathway that promotes cell death. Involved in cell size, vacuolar morphology and growth at high temperatures and high salt concentration. This chain is Ribonuclease T2-like (RNY1), found in Kluyveromyces lactis (strain ATCC 8585 / CBS 2359 / DSM 70799 / NBRC 1267 / NRRL Y-1140 / WM37) (Yeast).